The primary structure comprises 81 residues: Cytochrome b559 subunit alpha (81 aa).

A helical transmembrane segment spans residues 21–35 (IIHSITIPMLFIAGW). A heme-binding site is contributed by histidine 23.

Belongs to the PsbE/PsbF family. Heterodimer of an alpha subunit and a beta subunit. PSII is composed of 1 copy each of membrane proteins PsbA, PsbB, PsbC, PsbD, PsbE, PsbF, PsbH, PsbI, PsbJ, PsbK, PsbL, PsbM, PsbT, PsbX, PsbY, PsbZ, Psb30/Ycf12, peripheral proteins PsbO, CyanoQ (PsbQ), PsbU, PsbV and a large number of cofactors. It forms dimeric complexes. Requires heme b as cofactor.

It is found in the cellular thylakoid membrane. In terms of biological role, this b-type cytochrome is tightly associated with the reaction center of photosystem II (PSII). PSII is a light-driven water:plastoquinone oxidoreductase that uses light energy to abstract electrons from H(2)O, generating O(2) and a proton gradient subsequently used for ATP formation. It consists of a core antenna complex that captures photons, and an electron transfer chain that converts photonic excitation into a charge separation. The chain is Cytochrome b559 subunit alpha from Microcystis aeruginosa (strain NIES-843 / IAM M-2473).